The chain runs to 291 residues: ATP synthase gamma chain (291 aa).

The protein belongs to the ATPase gamma chain family. In terms of assembly, F-type ATPases have 2 components, CF(1) - the catalytic core - and CF(0) - the membrane proton channel. CF(1) has five subunits: alpha(3), beta(3), gamma(1), delta(1), epsilon(1). CF(0) has three main subunits: a, b and c.

The protein localises to the cell membrane. Its function is as follows. Produces ATP from ADP in the presence of a proton gradient across the membrane. The gamma chain is believed to be important in regulating ATPase activity and the flow of protons through the CF(0) complex. This Streptococcus equi subsp. equi (strain 4047) protein is ATP synthase gamma chain.